The primary structure comprises 285 residues: (2Z,6Z)-farnesyl diphosphate synthase CPT6, chloroplastic (285 aa).

The transit peptide at 1–30 directs the protein to the chloroplast; the sequence is MNSLFVGRPIVKSSYNVYTLPSSICGGHFF. The active site involves D65.

The protein belongs to the UPP synthase family. Mg(2+) is required as a cofactor. Expressed in roots and red fruits.

The protein localises to the plastid. The protein resides in the chloroplast. The catalysed reaction is 2 isopentenyl diphosphate + dimethylallyl diphosphate = (2Z,6Z)-farnesyl diphosphate + 2 diphosphate. It carries out the reaction isopentenyl diphosphate + dimethylallyl diphosphate = neryl diphosphate + diphosphate. It catalyses the reaction neryl diphosphate + isopentenyl diphosphate = (2Z,6Z)-farnesyl diphosphate + diphosphate. Functionally, uses neryl diphosphate to catalyze the cis-prenyl chain elongation and produce the 15 carbon product (2Z,6Z)-farnesyl diphosphate. The polypeptide is (2Z,6Z)-farnesyl diphosphate synthase CPT6, chloroplastic (Solanum lycopersicum (Tomato)).